The chain runs to 149 residues: Cytochrome c-type biogenesis protein CcmE (149 aa).

The Cytoplasmic segment spans residues 1 to 7 (MKKRHQR). Residues 8–28 (LFLVLGVVAGVSVATALVLNA) traverse the membrane as a helical; Signal-anchor for type II membrane protein segment. At 29–149 (FRDNMTFFIT…EHSVDEVGDY (121 aa)) the chain is on the periplasmic side. H123 and Y127 together coordinate heme.

The protein belongs to the CcmE/CycJ family.

It localises to the cell inner membrane. In terms of biological role, heme chaperone required for the biogenesis of c-type cytochromes. Transiently binds heme delivered by CcmC and transfers the heme to apo-cytochromes in a process facilitated by CcmF and CcmH. The polypeptide is Cytochrome c-type biogenesis protein CcmE (Halorhodospira halophila (strain DSM 244 / SL1) (Ectothiorhodospira halophila (strain DSM 244 / SL1))).